We begin with the raw amino-acid sequence, 288 residues long: Transmembrane protein 163 (288 aa).

A disordered region spans residues Met1 to Glu64. Over Met1–Ala87 the chain is Cytoplasmic. Position 11 is a phosphoserine (Ser11). Over residues Pro12–Gly24 the composition is skewed to pro residues. Residues His25–Ser42 are compositionally biased toward low complexity. Positions Ser41–Ser71 are required for interaction with MCOLN1. 4 positions are modified to phosphoserine: Ser45, Ser54, Ser56, and Ser60. Residues Leu88–Val108 form a helical membrane-spanning segment. The Extracellular segment spans residues Ser109–Ala115. Residues Ser116 to Trp136 form a helical membrane-spanning segment. Topologically, residues Arg137–Arg149 are cytoplasmic. A helical transmembrane segment spans residues Glu150–Val170. Topologically, residues Lys171–Asp186 are extracellular. A helical transmembrane segment spans residues Phe187–Phe207. At Met208–Arg216 the chain is on the cytoplasmic side. A helical transmembrane segment spans residues Ala217 to Leu237. Topologically, residues Ser238–Ser254 are extracellular. A helical transmembrane segment spans residues Ile255–Val275. Topologically, residues Pro276 to Glu288 are cytoplasmic.

It belongs to the TMEM163 family. Homodimer. Interacts with MCOLN1. Interacts with SLC30A1, SLC30A2, SLC30A3 and SLC30A4. In terms of tissue distribution, widely expressed, with high expression in the brain, cerebellum, heart, lung and spleen. In the brain, mainly expressed in the glutaminergic neuron subpopulations.

It is found in the cytoplasmic vesicle. Its subcellular location is the secretory vesicle. It localises to the synaptic vesicle membrane. The protein resides in the early endosome membrane. The protein localises to the late endosome membrane. It is found in the lysosome membrane. Its subcellular location is the cell membrane. It catalyses the reaction Zn(2+)(in) = Zn(2+)(out). Functionally, zinc ion transporter that mediates zinc efflux and plays a crucial role in intracellular zinc homeostasis. Binds the divalent cations Zn(2+), Ni(2+), and to a minor extent Cu(2+). Is a functional modulator of P2X purinoceptors, including P2RX1, P2RX3, P2RX4 and P2RX7. Plays a role in central nervous system development and is required for myelination, and survival and proliferation of oligodendrocytes. The protein is Transmembrane protein 163 (Tmem163) of Mus musculus (Mouse).